A 210-amino-acid chain; its full sequence is Ribosomal RNA small subunit methyltransferase G (210 aa).

S-adenosyl-L-methionine contacts are provided by residues Gly-76, Leu-81, 127–128 (VE), and Arg-142.

This sequence belongs to the methyltransferase superfamily. RNA methyltransferase RsmG family.

The protein resides in the cytoplasm. The catalysed reaction is guanosine(527) in 16S rRNA + S-adenosyl-L-methionine = N(7)-methylguanosine(527) in 16S rRNA + S-adenosyl-L-homocysteine. Functionally, specifically methylates the N7 position of guanine in position 527 of 16S rRNA. In Vibrio cholerae serotype O1 (strain ATCC 39315 / El Tor Inaba N16961), this protein is Ribosomal RNA small subunit methyltransferase G.